The sequence spans 149 residues: Immunoglobulin kappa chain variable 6-17 (149 aa).

Residues Met-1–Gly-29 form the signal peptide. 2 repeats span residues Gly-26–Gln-35 and Gly-38–Gln-47. Residues Asp-42 to Cys-64 form a framework-1 region. The tract at residues Lys-65–Ala-75 is complementarity-determining-1. The tract at residues Trp-76–Tyr-90 is framework-2. The segment at Ser-91–Thr-97 is complementarity-determining-2. Positions Gly-98–Cys-129 are framework-3. A complementarity-determining-3 region spans residues Gln-130–Thr-138. A framework-4 region spans residues Phe-139–Lys-148.

In Mus musculus (Mouse), this protein is Immunoglobulin kappa chain variable 6-17.